Reading from the N-terminus, the 85-residue chain is Small ribosomal subunit protein uS17 (85 aa).

This sequence belongs to the universal ribosomal protein uS17 family. In terms of assembly, part of the 30S ribosomal subunit.

In terms of biological role, one of the primary rRNA binding proteins, it binds specifically to the 5'-end of 16S ribosomal RNA. The protein is Small ribosomal subunit protein uS17 of Mycoplasma genitalium (strain ATCC 33530 / DSM 19775 / NCTC 10195 / G37) (Mycoplasmoides genitalium).